The sequence spans 344 residues: Eukaryotic translation initiation factor 2 subunit alpha (344 aa).

An S1 motif domain is found at 21-92 (DMAVMIQVKT…ERGYIDLSKR (72 aa)). A Phosphoserine; by GCN2 modification is found at Ser56. Positions 309–344 (LRMDNEEMSGDEGSEDEEEDTGMGEVDIDGGSGIIE) are disordered. Residues 314-336 (EEMSGDEGSEDEEEDTGMGEVDI) show a composition bias toward acidic residues. A phosphoserine; by CK2 mark is found at Ser317 and Ser322.

Belongs to the eIF-2-alpha family. In terms of assembly, eukaryotic translation initiation factor 2 eIF2 is a heterotrimeric complex composed of an alpha, a beta and a gamma subunit. Phosphorylated at Ser-56 by GCN2. Phosphorylated at Ser-317 and Ser-322 by CK2.

The protein resides in the cytoplasm. It is found in the cytosol. Its function is as follows. Functions in the early steps of protein synthesis by forming a ternary complex with GTP and initiator tRNA. This complex binds to a 40S ribosomal subunit, followed by mRNA binding to form a 43S pre-initiation complex. Junction of the 60S ribosomal subunit to form the 80S initiation complex is preceded by hydrolysis of the GTP bound to eIF-2 and release of an eIF-2-GDP binary complex. In order for eIF-2 to recycle and catalyze another round of initiation, the GDP bound to eIF-2 must exchange with GTP by way of a reaction catalyzed by eIF2B. The protein is Eukaryotic translation initiation factor 2 subunit alpha of Arabidopsis thaliana (Mouse-ear cress).